Consider the following 1036-residue polypeptide: uncharacterized protein (1036 aa).

A signal peptide spans 1–24; that stretch reads MKRVGLIGVIMAALLVISATPVMA. Residues 1011-1033 form a helical membrane-spanning segment; that stretch reads GGGVPGFEAVFAIAGLLAVAYLL.

It localises to the membrane. This is an uncharacterized protein from Archaeoglobus fulgidus (strain ATCC 49558 / DSM 4304 / JCM 9628 / NBRC 100126 / VC-16).